The sequence spans 171 residues: Cyclin-dependent kinase inhibitor 2A (171 aa).

Over residues 33 to 42 (ASMHTKHESE) the composition is skewed to basic and acidic residues. Positions 33–52 (ASMHTKHESEESFSGEKLTE) are disordered. 3 ANK repeats span residues 45 to 74 (FSGE…NPNA), 78 to 106 (FGRS…EPNT), and 111 to 140 (TLTL…RLDV).

Belongs to the CDKN2 cyclin-dependent kinase inhibitor family. Heterodimer with CDK4 or CDK6. Predominamt P16 complexes contained CDK6. Interacts with CDK4 (both 'T-172'-phosphorylated and non-phosphorylated forms); the interaction inhibits cyclin D-CDK4 kinase activity. Interacts with ISCO2. In terms of tissue distribution, expressed predominantly in lung and testis. In the testis, restricted to germ cells in the seminiferous epithelium. Not detected in premeiotic spermatogonia but high levels found in postmeiotic spermatids. In primary tumors, low levels detected in melanocytic hyperplasias. Higher levels found in non-metastatic and metastatic melanomas.

Its subcellular location is the cytoplasm. It is found in the nucleus. Acts as a negative regulator of the proliferation of normal cells by interacting strongly with CDK4 and CDK6. This inhibits their ability to interact with cyclins D and to phosphorylate the retinoblastoma protein. This Monodelphis domestica (Gray short-tailed opossum) protein is Cyclin-dependent kinase inhibitor 2A.